The chain runs to 493 residues: MKKTKNNYYTRPLAIGLSTFALASIVYGGIQNETHASEKSNMDVSKKVAEVETSKAPVENTAEVETSKAPVENTAEVETSKAPVENTAEVETSKAPVENTAEVETSKAPVENTAEVETSKAPVENTAEVETSKAPVENTAEVETSKAPVENTAEVETSKAPVENTAEVETSKAPVENTAEVETSKAPVENTAEVETSKAPVENTAEVETSKAPVENTAEVETSKAPVENTAEVETSKALVQNRTALRAATHEHSAQWLNNYKKGYGYGPYPLGINGGMHYGVDFFMNIGTPVKAISSGKIVEAGWSNYGGGNQIGLIENDGVHRQWYMHLSKYNVKVGDYVKAGQIIGWSGSTGYSTAPHLHFQRMVNSFSNSTAQDPMPFLKSAGYGKAGGTVTPTPNTGWKTNKYGTLYKSESASFTPNTDIITRTTGPFRSMPQSGVLKAGQTIHYDEVMKQDGHVWVGYTGNSGQRIYLPVRTWNKSTNTLGVLWGTIK.

An N-terminal signal peptide occupies residues 1 to 23 (MKKTKNNYYTRPLAIGLSTFALA). Positions 24–247 (SIVYGGIQNE…ALVQNRTALR (224 aa)) are excised as a propeptide. 14 tandem repeats follow at residues 49-61 (AEVE…VENT), 62-74 (AEVE…VENT), 75-87 (AEVE…VENT), 88-100 (AEVE…VENT), 101-113 (AEVE…VENT), 114-126 (AEVE…VENT), 127-139 (AEVE…VENT), 140-152 (AEVE…VENT), 153-165 (AEVE…VENT), 166-178 (AEVE…VENT), 179-191 (AEVE…VENT), 192-204 (AEVE…VENT), 205-217 (AEVE…VENT), and 218-230 (AEVE…VENT). The segment at 49–243 (AEVETSKAPV…ETSKALVQNR (195 aa)) is 15 X 13 AA approximate tandem repeats of A-E-V-E-T-S-K-A-P-V-E-N-T. Positions 52-232 (ETSKAPVENT…SKAPVENTAE (181 aa)) are disordered. A 15; approximate repeat occupies 231–243 (AEVETSKALVQNR). Residues His-279 and Asp-283 each coordinate Zn(2+). Residue His-360 is part of the active site. Residue His-362 participates in Zn(2+) binding. Positions 413-481 (SESASFTPNT…YLPVRTWNKS (69 aa)) constitute an SH3b domain.

The protein belongs to the peptidase M23B family. In terms of assembly, monomer. The cofactor is Zn(2+).

The protein localises to the secreted. It carries out the reaction Hydrolysis of the -Gly-|-Gly- bond in the pentaglycine inter-peptide link joining staphylococcal cell wall peptidoglycans.. Its function is as follows. Lyses staphylococcal cells by hydrolyzing the polyglycine interpeptide bridges of the peptidoglycan. This chain is Lysostaphin (lss), found in Staphylococcus simulans.